Reading from the N-terminus, the 360-residue chain is Leukotriene B4 receptor 2 (360 aa).

Residues 1–24 (MSVCYRPPGNETLLSWKGSRATGT) are Extracellular-facing. The N-linked (GlcNAc...) asparagine glycan is linked to Asn-10. The helical transmembrane segment at 25–45 (AFLLLAALLGLPGNGFVVWSL) threads the bilayer. Over 46–60 (AGWRPTAGRPLAATL) the chain is Cytoplasmic. Residues 61–81 (VLHLALADGAVLLLTPLFVAF) traverse the membrane as a helical segment. At 82-96 (LSQEAWPLGQVGCKA) the chain is on the extracellular side. A helical transmembrane segment spans residues 97 to 117 (VYYVCALSMYASVLLTGLLSL). Topologically, residues 118 to 140 (QRCLAVTRPFLAPRLRSPALARR) are cytoplasmic. A helical transmembrane segment spans residues 141-161 (LLLGVWLAALVLAVPAAVYRH). At 162–185 (LWGGRVCQLCHPSPVHAAAHLSLE) the chain is on the extracellular side. A helical membrane pass occupies residues 186 to 206 (TLTAFVLPFGTVLGCYGVTLA). At 207–224 (RLRGARWGSGRQGTRVGR) the chain is on the cytoplasmic side. A helical membrane pass occupies residues 225–245 (LVSAIVLAFGLLWAPYHAVNL). The Extracellular segment spans residues 246–275 (LQAVAALAPPEGPLARLGGAGQAARAGTTA). A helical membrane pass occupies residues 276-296 (LAFFSSSVNPVLYVFTAGDLL). Residues 297–360 (PRAGPRFLTR…GKTEKDSQEW (64 aa)) lie on the Cytoplasmic side of the membrane. The tract at residues 311–360 (SGEARGGSRSREGTMELRTTPKLKVMGQGRGNGDPGGGDGGKTEKDSQEW) is disordered. The span at 338–350 (QGRGNGDPGGGDG) shows a compositional bias: gly residues. Residues 351–360 (GKTEKDSQEW) show a composition bias toward basic and acidic residues.

It belongs to the G-protein coupled receptor 1 family.

The protein resides in the cell membrane. Low-affinity receptor for leukotrienes including leukotriene B4. Mediates chemotaxis of granulocytes and macrophages. The response is mediated via G-proteins that activate a phosphatidylinositol-calcium second messenger system. The chain is Leukotriene B4 receptor 2 (Ltb4r2) from Mus musculus (Mouse).